The chain runs to 300 residues: Ribosomal protein L11 methyltransferase (300 aa).

Residues Thr152, Gly173, Asp195, and Asn234 each contribute to the S-adenosyl-L-methionine site.

Belongs to the methyltransferase superfamily. PrmA family.

It is found in the cytoplasm. The enzyme catalyses L-lysyl-[protein] + 3 S-adenosyl-L-methionine = N(6),N(6),N(6)-trimethyl-L-lysyl-[protein] + 3 S-adenosyl-L-homocysteine + 3 H(+). Methylates ribosomal protein L11. This Burkholderia pseudomallei (strain K96243) protein is Ribosomal protein L11 methyltransferase.